A 381-amino-acid chain; its full sequence is MGCLGGNSKTTEDQGVDEKERREANKKIEKQLQKERLAYKATHRLLLLGAGESGKSTIVKQMRILHVNGFNPEEKKQKILDIRKNVKDAIVTIVSAMSTIIPPVPLANPENQFRSDYIKSIAPITDFEYSQEFFDHVKKLWDDEGVKACFERSNEYQLIDCAQYFLERIDSVSLVDYTPTDQDLLRCRVLTSGIFETRFQVDKVNFHMFDVGGQRDERRKWIQCFNDVTAIIYVAACSSYNMVIREDNNTNRLRESLDLFESIWNNRWLRTISIILFLNKQDMLAEKVLAGKSKIEDYFPEYANYTVPEDATPDAGEDPKVTRAKFFIRDLFLRISTATGDGKHYCYPHFTCAVDTENIRRVFNDCRDIIQRMHLKQYELL.

The tract at residues 1-25 (MGCLGGNSKTTEDQGVDEKERREAN) is disordered. Glycine 2 carries N-palmitoyl glycine lipidation. Cysteine 3 carries S-palmitoyl cysteine lipidation. Basic and acidic residues predominate over residues 10 to 25 (TTEDQGVDEKERREAN). Positions 41 to 381 (ATHRLLLLGA…RMHLKQYELL (341 aa)) constitute a G-alpha domain. Positions 44-57 (RLLLLGAGESGKST) are G1 motif. GTP contacts are provided by glutamate 52, serine 53, glycine 54, lysine 55, serine 56, and threonine 57. Serine 56 serves as a coordination point for Mg(2+). Phosphothreonine is present on threonine 178. Residues 183–191 (DLLRCRVLT) form a G2 motif region. Leucine 185 and arginine 186 together coordinate GTP. Residue arginine 188 is modified to ADP-ribosylarginine; by cholera toxin. Threonine 191 lines the GTP pocket. The Mg(2+) site is built by threonine 191 and aspartate 210. Positions 206–215 (FHMFDVGGQR) are G3 motif. GTP is bound by residues glycine 213, asparagine 279, lysine 280, aspartate 282, and alanine 353. The tract at residues 275 to 282 (ILFLNKQD) is G4 motif. The interval 351–356 (TCAVDT) is G5 motif.

Belongs to the G-alpha family. G(s) subfamily. G proteins are composed of 3 units; alpha, beta and gamma. The alpha chain contains the guanine nucleotide binding site. Interacts with GAS2L2. Interacts (GDP-bound form) with RIC8B (via C-terminus); promoting GNAL folding and association with the plasma membrane. In terms of tissue distribution, detected in olfactory neuroepithelium, brain, testis, and to a lower extent in retina, lung alveoli, spleen. Trace amounts where seen in kidney, adrenal gland and liver. Found to be expressed in all the insulinomas examined.

The protein resides in the cell membrane. The catalysed reaction is GTP + H2O = GDP + phosphate + H(+). In terms of biological role, guanine nucleotide-binding protein (G protein) involved as transducer in olfactory signal transduction controlled by G protein-coupled receptors (GPCRs). Contains the guanine nucleotide binding site and alternates between an active, GTP-bound state and an inactive, GDP-bound state. Signaling by an activated GPCR promotes GDP release and GTP binding. The alpha subunit has a low GTPase activity that converts bound GTP to GDP, thereby terminating the signal. Both GDP release and GTP hydrolysis are modulated by numerous regulatory proteins. GNAL/G(olf) alpha specifically mediates olfactory signal transduction within the olfactory neuroepithelium and the basal ganglia following GPCRs activation. Acts by promoting the specific activation of adenylyl cyclase ADCY3, resulting in increased levels of the signaling molecule cAMP. This Homo sapiens (Human) protein is Guanine nucleotide-binding protein G(olf) subunit alpha.